Here is a 184-residue protein sequence, read N- to C-terminus: NADH-quinone oxidoreductase subunit B (184 aa).

Positions 37, 38, 103, and 132 each coordinate [4Fe-4S] cluster.

This sequence belongs to the complex I 20 kDa subunit family. As to quaternary structure, NDH-1 is composed of 14 different subunits. Subunits NuoB, C, D, E, F, and G constitute the peripheral sector of the complex. Requires [4Fe-4S] cluster as cofactor.

It is found in the cell membrane. The enzyme catalyses a quinone + NADH + 5 H(+)(in) = a quinol + NAD(+) + 4 H(+)(out). In terms of biological role, NDH-1 shuttles electrons from NADH, via FMN and iron-sulfur (Fe-S) centers, to quinones in the respiratory chain. The immediate electron acceptor for the enzyme in this species is believed to be a menaquinone. Couples the redox reaction to proton translocation (for every two electrons transferred, four hydrogen ions are translocated across the cytoplasmic membrane), and thus conserves the redox energy in a proton gradient. The sequence is that of NADH-quinone oxidoreductase subunit B from Beutenbergia cavernae (strain ATCC BAA-8 / DSM 12333 / CCUG 43141 / JCM 11478 / NBRC 16432 / NCIMB 13614 / HKI 0122).